We begin with the raw amino-acid sequence, 430 residues long: Histidinol dehydrogenase (430 aa).

3 residues coordinate NAD(+): Tyr130, Gln191, and Asn214. Residues Ser237, Gln259, and His262 each coordinate substrate. Residues Gln259 and His262 each coordinate Zn(2+). Active-site proton acceptor residues include Glu327 and His328. Residues His328, Asp361, Glu415, and His420 each coordinate substrate. Zn(2+) is bound at residue Asp361. Residue His420 participates in Zn(2+) binding.

This sequence belongs to the histidinol dehydrogenase family. Zn(2+) serves as cofactor.

The catalysed reaction is L-histidinol + 2 NAD(+) + H2O = L-histidine + 2 NADH + 3 H(+). Its pathway is amino-acid biosynthesis; L-histidine biosynthesis; L-histidine from 5-phospho-alpha-D-ribose 1-diphosphate: step 9/9. Its function is as follows. Catalyzes the sequential NAD-dependent oxidations of L-histidinol to L-histidinaldehyde and then to L-histidine. This Zymomonas mobilis subsp. mobilis (strain ATCC 31821 / ZM4 / CP4) protein is Histidinol dehydrogenase (hisD).